A 199-amino-acid polypeptide reads, in one-letter code: Imidazoleglycerol-phosphate dehydratase (199 aa).

Belongs to the imidazoleglycerol-phosphate dehydratase family.

Its subcellular location is the cytoplasm. It carries out the reaction D-erythro-1-(imidazol-4-yl)glycerol 3-phosphate = 3-(imidazol-4-yl)-2-oxopropyl phosphate + H2O. Its pathway is amino-acid biosynthesis; L-histidine biosynthesis; L-histidine from 5-phospho-alpha-D-ribose 1-diphosphate: step 6/9. This Desulfotalea psychrophila (strain LSv54 / DSM 12343) protein is Imidazoleglycerol-phosphate dehydratase.